The chain runs to 268 residues: Small ribosomal subunit protein mS43 (268 aa).

The N-terminal 23 residues, 1–23, are a transit peptide targeting the mitochondrion; that stretch reads MLNTGLRKGLALSPITHLLKRCS.

It belongs to the mitochondrion-specific ribosomal protein mS43 family. In terms of assembly, component of the mitochondrial small ribosomal subunit (mt-SSU). Mature yeast 74S mitochondrial ribosomes consist of a small (37S) and a large (54S) subunit. The 37S small subunit contains a 15S ribosomal RNA (15S mt-rRNA) and at least 32 different proteins. The 54S large subunit contains a 21S rRNA (21S mt-rRNA) and at least 45 different proteins. mS43 forms a dimer with mS42, building a large protuberance adjacent to the mRNA channel exit in the mt-SSU body.

The protein resides in the mitochondrion. Its function is as follows. Component of the mitochondrial ribosome (mitoribosome), a dedicated translation machinery responsible for the synthesis of mitochondrial genome-encoded proteins, including at least some of the essential transmembrane subunits of the mitochondrial respiratory chain. The mitoribosomes are attached to the mitochondrial inner membrane and translation products are cotranslationally integrated into the membrane. In Schizosaccharomyces pombe (strain 972 / ATCC 24843) (Fission yeast), this protein is Small ribosomal subunit protein mS43.